A 139-amino-acid chain; its full sequence is uncharacterized protein (139 aa).

An HTH asnC-type domain is found at methionine 1–histidine 62. The segment at residues methionine 20–arginine 39 is a DNA-binding region (H-T-H motif).

This is an uncharacterized protein from Bacillus subtilis (strain 168).